Consider the following 484-residue polypeptide: Sperm motility kinase 1 (484 aa).

Residues Tyr8 to Ile256 enclose the Protein kinase domain. ATP-binding positions include Ile14–Val22 and Lys37. Catalysis depends on Asp127, which acts as the Proton acceptor. In terms of domain architecture, UBA spans Lys274–Lys314. The segment covering Ile423–Ser434 has biased composition (polar residues). Residues Ile423–Arg447 form a disordered region.

It belongs to the protein kinase superfamily. Tyr protein kinase family. Smok subfamily. Testis-specific. Expressed in the testis from 22 days postpartum (22 dpp).

It catalyses the reaction L-seryl-[protein] + ATP = O-phospho-L-seryl-[protein] + ADP + H(+). The enzyme catalyses L-threonyl-[protein] + ATP = O-phospho-L-threonyl-[protein] + ADP + H(+). In terms of biological role, may play a role in sperm motility, especially in the regulation of flagellar function. This chain is Sperm motility kinase 1 (Smok1), found in Mus musculus (Mouse).